We begin with the raw amino-acid sequence, 714 residues long: VIN3-like protein 2 (714 aa).

Residues 164–232 form a PHD-type zinc finger; sequence RCSCCICRKY…CFYCVSCGKA (69 aa). The short motif at 239-246 is the Nuclear localization signal element; sequence WKKQLTIA. In terms of domain architecture, Fibronectin type-III spans 366-463; sequence GSTKIRFEDV…INVLTRSAEE (98 aa). Residues 478–498 are compositionally biased toward polar residues; that stretch reads LTNCSTLSSNPSSVEAESNND. The tract at residues 478–530 is disordered; sequence LTNCSTLSSNPSSVEAESNNDYIVPKKPSSKNEDNNSPSVDESAAKRMKRTTD. Residues 602 to 714 form a VIN3-Interacting Domain (VID) region; that stretch reads SMKDNCNNGD…PSGFCMKLWH (113 aa).

Self-interacts. Interacts with VIN3 and VIL1. Component of the plant homeodomain / polycomb repressive complex 2 (PHD-PRC2) large complex during prolonged cold, composed of core PRC2 components (VRN2, EZA1, FIE and MSI1), and three related PHD finger proteins (VIL1, VIL2 and VIN3) that mediates histone H3 trimethylation on 'Lys-27' (H3K27me3).

The protein resides in the nucleus. In terms of biological role, maybe involved in both the vernalization and photoperiod pathways by regulating gene expression. Binds preferentially to dimethylated histone H3 'Lys-9' (H3K9me2). Promotes flowering in non-inductive photoperiods (e.g. short days) through the maintenance of the epigenetically repressed state of MAF5 via H3K9me2 and plant homeodomain / polycomb repressive complex 2 (PHD-PRC2)-dependent H3K27me3. This Arabidopsis thaliana (Mouse-ear cress) protein is VIN3-like protein 2 (VIL2).